The primary structure comprises 396 residues: Apurinic-apyrimidinic endonuclease (396 aa).

Residues 31 to 41 are compositionally biased toward basic residues; it reads KGRGKIQKHIQ. Residues 31 to 100 are disordered; that stretch reads KGRGKIQKHI…TSGETIAQKK (70 aa). The span at 55 to 70 shows a compositional bias: polar residues; the sequence is NQSPGTTVEETLTEEN. The segment covering 72–85 has biased composition (basic and acidic residues); sequence STDKEETSKLENKP. Zn(2+)-binding residues include His185, His225, Glu261, Asp295, His298, His332, Asp345, His347, and Glu377.

It belongs to the AP endonuclease 2 family. Zn(2+) is required as a cofactor.

It localises to the nucleus. In Caenorhabditis elegans, this protein is Apurinic-apyrimidinic endonuclease (apn-1).